Reading from the N-terminus, the 20-residue chain is Bulb protein (20 aa).

The disordered stretch occupies residues 1–20; that stretch reads APDVHTRXTQNGLPPGXLPS.

The chain is Bulb protein from Narcissus pseudonarcissus (Daffodil).